Reading from the N-terminus, the 131-residue chain is Large ribosomal subunit protein bL19 (131 aa).

Belongs to the bacterial ribosomal protein bL19 family.

Its function is as follows. This protein is located at the 30S-50S ribosomal subunit interface and may play a role in the structure and function of the aminoacyl-tRNA binding site. The polypeptide is Large ribosomal subunit protein bL19 (Rhodopseudomonas palustris (strain BisB18)).